The following is a 105-amino-acid chain: Cuticle protein AMP1B (105 aa).

The interval 1–21 (DRDAQTLTDERSDQGDGNFRY) is disordered. The region spanning 16-81 (DGNFRYEFET…PSSDLLPVPP (66 aa)) is the Chitin-binding type R&amp;R domain.

As to expression, arthrodial membrane.

The chain is Cuticle protein AMP1B from Homarus americanus (American lobster).